The primary structure comprises 1600 residues: A disintegrin and metalloproteinase with thrombospondin motifs 12 (1600 aa).

An N-terminal signal peptide occupies residues 1 to 25 (MPCARGSWLAKLSIVAQLINFGAFC). Positions 26–244 (HGRQTQPWPV…TLRSRSLSRR (219 aa)) are excised as a propeptide. Asn105 is a glycosylation site (N-linked (GlcNAc...) asparagine). A Cysteine switch motif is present at residues 210–217 (PICGLKDS). Cys212 is a binding site for Zn(2+). The Peptidase M12B domain maps to 250 to 460 (RWVETLVVAD…GRGFCLDDIP (211 aa)). Intrachain disulfides connect Cys326–Cys380, Cys355–Cys362, Cys374–Cys455, Cys413–Cys439, Cys482–Cys505, Cys493–Cys511, Cys500–Cys530, Cys524–Cys535, Cys558–Cys595, Cys562–Cys600, and Cys573–Cys585. His396 serves as a coordination point for Zn(2+). Glu397 is an active-site residue. 2 residues coordinate Zn(2+): His400 and His406. The 80-residue stretch at 469–548 (VIAPGVIYDV…GKKPESIPGG (80 aa)) folds into the Disintegrin domain. 4 TSP type-1 domains span residues 546–601 (PGGW…HPCR), 827–887 (KLLY…KDCP), 891–947 (WAGE…RDIL), and 948–1001 (CPSD…QQCP). The segment at 705–831 (CQTVKKLFRQ…DNDVEKLLYF (127 aa)) is spacer 1. The interval 1001 to 1321 (PFSRRVLKPN…HLMKDHSPAY (321 aa)) is spacer 2. Disordered stretches follow at residues 1006 to 1140 (VLKP…LSSS) and 1158 to 1179 (PEVE…KDKS). Low complexity predominate over residues 1038–1047 (PTPLSTPTVP). Polar residues predominate over residues 1048 to 1107 (ESMSTSTPTINSLGSTIASQEDANGMGWQNNSTQAEEGSHFPTSSGSTSQVPVTSWSLSI). Over residues 1130–1140 (TTTSDSGLSSS) the composition is skewed to low complexity. TSP type-1 domains lie at 1318-1371 (SPAY…RPCA), 1373-1428 (WRVG…CNLE), 1429-1477 (PCGE…NRHL), and 1478-1538 (CCHW…QACR). The 41-residue stretch at 1541–1581 (ADLTCLKDRLSISFCQTLKSMRKCSVPSVRAQCCLSCPQAP) folds into the PLAC domain.

As to quaternary structure, interacts with COMP. It depends on Zn(2+) as a cofactor. In terms of processing, the precursor is cleaved by a furin endopeptidase. Post-translationally, subjected to an intracellular maturation process yielding a 120 kDa N-terminal fragment containing the metalloproteinase, disintegrin, one TSP type-1 and the Cys-rich domains and a 83 kDa C-terminal fragment containing the spacer 2 and four TSP type-1 domains. Glycosylated. Can be O-fucosylated by POFUT2 on a serine or a threonine residue found within the consensus sequence C1-X(2)-(S/T)-C2-G of the TSP type-1 repeat domains where C1 and C2 are the first and second cysteine residue of the repeat, respectively. Fucosylated repeats can then be further glycosylated by the addition of a beta-1,3-glucose residue by the glucosyltransferase, B3GALTL. Fucosylation mediates the efficient secretion of ADAMTS family members. Can also be C-glycosylated with one or two mannose molecules on tryptophan residues within the consensus sequence W-X-X-W of the TPRs, and N-glycosylated. These other glycosylations can also facilitate secretion.

Its subcellular location is the secreted. The protein resides in the extracellular space. The protein localises to the extracellular matrix. With respect to regulation, inhibited by alpha-2 macroglobulin. Functionally, metalloprotease that plays a role in the degradation of COMP. Also cleaves alpha-2 macroglobulin and aggregan. Has anti-tumorigenic properties. The sequence is that of A disintegrin and metalloproteinase with thrombospondin motifs 12 (Adamts12) from Mus musculus (Mouse).